Consider the following 410-residue polypeptide: Dipeptidase 1 (410 aa).

The N-terminal stretch at 1–16 (MWTGWWLWPLVAVCTA) is a signal peptide. Residues His36 and Asp38 each coordinate Zn(2+). Asn57 and Asn62 each carry an N-linked (GlcNAc...) asparagine glycan. Cys87 and Cys170 form a disulfide bridge. Glu141 is a binding site for Zn(2+). Position 168 (His168) interacts with substrate. Zn(2+) is bound by residues His214 and His235. The cysteines at positions 242 and 274 are disulfide-linked. Arg246 contacts substrate. N-linked (GlcNAc...) asparagine glycosylation is present at Asn279. Substrate is bound at residue Asp304. Residue Ser384 is the site of GPI-anchor amidated serine attachment. Residues 385-410 (GAPSLHLQPGTLLASLVTLLLSLCLL) constitute a propeptide, removed in mature form.

The protein belongs to the metallo-dependent hydrolases superfamily. Peptidase M19 family. In terms of assembly, homodimer; disulfide-linked. The cofactor is Zn(2+).

The protein localises to the apical cell membrane. The enzyme catalyses an L-aminoacyl-L-amino acid + H2O = 2 an L-alpha-amino acid. It carries out the reaction leukotriene D4 + H2O = leukotriene E4 + glycine. The catalysed reaction is L-cystine-bis-glycine + 2 H2O = L-cystine + 2 glycine. It catalyses the reaction a beta-lactam + H2O = a substituted beta-amino acid. The enzyme catalyses glycyldehydrophenylalanine + H2O = 2,3-didehydrophenylalanine + glycine. Inhibited by L-penicillamine. Inhibited by cilastatin. Hydrolyzes a wide range of dipeptides including the conversion of leukotriene D4 to leukotriene E4. Hydrolyzes cystinyl-bis-glycine (cys-bis-gly) formed during glutathione degradation. Also possesses beta lactamase activity and hydrolytically inactivates beta-lactam antibiotics. In terms of biological role, independently of its dipeptidase activity, acts as an adhesion receptor for neutrophil recruitment from bloodstream into inflamed lungs and liver. This is Dipeptidase 1 (DPEP1) from Bos taurus (Bovine).